The chain runs to 146 residues: Acidic phospholipase A2 D (146 aa).

The signal sequence occupies residues 1–21 (MNPAHLLILAAVCVSPLGASS). Residues 22–27 (NRPMPL) constitute a propeptide that is removed on maturation. Disulfide bonds link Cys38-Cys98, Cys53-Cys145, Cys55-Cys71, Cys70-Cys126, Cys77-Cys119, Cys87-Cys112, and Cys105-Cys117. 3 residues coordinate Ca(2+): Tyr54, Gly56, and Gly58. Residue His74 is part of the active site. Asp75 is a Ca(2+) binding site. Asp120 is an active-site residue.

It belongs to the phospholipase A2 family. Group I subfamily. D49 sub-subfamily. The cofactor is Ca(2+). As to expression, expressed by the venom gland.

It localises to the secreted. The catalysed reaction is a 1,2-diacyl-sn-glycero-3-phosphocholine + H2O = a 1-acyl-sn-glycero-3-phosphocholine + a fatty acid + H(+). Functionally, PLA2 catalyzes the calcium-dependent hydrolysis of the 2-acyl groups in 3-sn-phosphoglycerides. The polypeptide is Acidic phospholipase A2 D (Naja sputatrix (Malayan spitting cobra)).